Consider the following 328-residue polypeptide: Phosphatidate cytidylyltransferase (328 aa).

The span at 15-29 (SGRSATKSVTTNDAG) shows a compositional bias: polar residues. The disordered stretch occupies residues 15-50 (SGRSATKSVTTNDAGTGNPAEQPARGAKQQPATETS). A run of 7 helical transmembrane segments spans residues 58 to 78 (AAIV…VFVP), 103 to 123 (AGYL…VWLT), 124 to 144 (WPFG…VCMI), 173 to 193 (ATVF…MLVY), 202 to 222 (FCMM…GVLF), 239 to 259 (GFAG…TFLV), and 263 to 283 (PWIG…GDLV).

This sequence belongs to the CDS family.

It is found in the cell membrane. It carries out the reaction a 1,2-diacyl-sn-glycero-3-phosphate + CTP + H(+) = a CDP-1,2-diacyl-sn-glycerol + diphosphate. Its pathway is phospholipid metabolism; CDP-diacylglycerol biosynthesis; CDP-diacylglycerol from sn-glycerol 3-phosphate: step 3/3. The sequence is that of Phosphatidate cytidylyltransferase (cdsA) from Mycobacterium tuberculosis (strain CDC 1551 / Oshkosh).